The chain runs to 393 residues: Putative N(4)-(beta-N-acetylglucosaminyl)-L-asparaginase CG1827 (393 aa).

An N-terminal signal peptide occupies residues 1–23 (MRRHLRASLWILCLATMAFSILA). 2 N-linked (GlcNAc...) asparagine glycosylation sites follow: Asn-49 and Asn-64. Intrachain disulfides connect Cys-97–Cys-102 and Cys-196–Cys-212. Thr-243 serves as the catalytic Nucleophile. Residues 271–274 (RVGD) and 294–297 (TGDG) contribute to the substrate site. Cys-354 and Cys-381 are joined by a disulfide.

The protein belongs to the Ntn-hydrolase family. In terms of assembly, heterotetramer of two alpha and two beta chains arranged as a dimer of alpha/beta heterodimers. In terms of processing, cleaved into an alpha and beta chain by autocatalysis; this activates the enzyme. The N-terminal residue of the beta subunit is responsible for the nucleophile hydrolase activity.

The enzyme catalyses N(4)-(beta-N-acetyl-D-glucosaminyl)-L-asparagine + H2O = N-acetyl-beta-D-glucosaminylamine + L-aspartate + H(+). In terms of biological role, cleaves the GlcNAc-Asn bond which joins oligosaccharides to the peptide of asparagine-linked glycoproteins. The protein is Putative N(4)-(beta-N-acetylglucosaminyl)-L-asparaginase CG1827 of Drosophila melanogaster (Fruit fly).